Here is a 380-residue protein sequence, read N- to C-terminus: Homoserine O-succinyltransferase (380 aa).

Positions 49-357 (NAILICHALS…ESTHGHDAFL (309 aa)) constitute an AB hydrolase-1 domain. S155 (nucleophile) is an active-site residue. R225 lines the substrate pocket. Active-site residues include D320 and H353. D354 provides a ligand contact to substrate.

The protein belongs to the AB hydrolase superfamily. MetX family. As to quaternary structure, homodimer.

The protein localises to the cytoplasm. The catalysed reaction is L-homoserine + succinyl-CoA = O-succinyl-L-homoserine + CoA. It participates in amino-acid biosynthesis; L-methionine biosynthesis via de novo pathway; O-succinyl-L-homoserine from L-homoserine: step 1/1. Its function is as follows. Transfers a succinyl group from succinyl-CoA to L-homoserine, forming succinyl-L-homoserine. The chain is Homoserine O-succinyltransferase from Laribacter hongkongensis (strain HLHK9).